Here is a 634-residue protein sequence, read N- to C-terminus: Chaperone protein HtpG (634 aa).

The interval 1-339 (MAQETMSFQA…SADLPLNVSR (339 aa)) is a; substrate-binding. The interval 340–559 (EILQESRDVK…DGEMSGYLQR (220 aa)) is b. The tract at residues 560-634 (MLKAAGQQAP…ALLLARANEA (75 aa)) is c.

Belongs to the heat shock protein 90 family. As to quaternary structure, homodimer.

The protein localises to the cytoplasm. Molecular chaperone. Has ATPase activity. The protein is Chaperone protein HtpG of Paraburkholderia xenovorans (strain LB400).